The chain runs to 188 residues: Acireductone dioxygenase (188 aa).

Fe(2+) contacts are provided by H97, H99, E103, and H141. Residues H97, H99, E103, and H141 each coordinate Ni(2+).

The protein belongs to the acireductone dioxygenase (ARD) family. Monomer. Fe(2+) is required as a cofactor. Requires Ni(2+) as cofactor.

The enzyme catalyses 1,2-dihydroxy-5-(methylsulfanyl)pent-1-en-3-one + O2 = 3-(methylsulfanyl)propanoate + CO + formate + 2 H(+). It carries out the reaction 1,2-dihydroxy-5-(methylsulfanyl)pent-1-en-3-one + O2 = 4-methylsulfanyl-2-oxobutanoate + formate + 2 H(+). It functions in the pathway amino-acid biosynthesis; L-methionine biosynthesis via salvage pathway; L-methionine from S-methyl-5-thio-alpha-D-ribose 1-phosphate: step 5/6. Functionally, catalyzes 2 different reactions between oxygen and the acireductone 1,2-dihydroxy-3-keto-5-methylthiopentene (DHK-MTPene) depending upon the metal bound in the active site. Fe-containing acireductone dioxygenase (Fe-ARD) produces formate and 2-keto-4-methylthiobutyrate (KMTB), the alpha-ketoacid precursor of methionine in the methionine recycle pathway. Ni-containing acireductone dioxygenase (Ni-ARD) produces methylthiopropionate, carbon monoxide and formate, and does not lie on the methionine recycle pathway. In Xanthomonas oryzae pv. oryzae (strain MAFF 311018), this protein is Acireductone dioxygenase.